A 264-amino-acid polypeptide reads, in one-letter code: Stage IV sporulation protein FA (264 aa).

The span at 1–10 shows a compositional bias: basic and acidic residues; that stretch reads MSHRADEIRK. A disordered region spans residues 1 to 37; it reads MSHRADEIRKRLEKRRKQLSGSKRFSTQTVSEKQKPP. Over 1-72 the chain is Mother cell cytoplasmic; that stretch reads MSHRADEIRK…GKHPLVKTDS (72 aa). The segment covering 19-31 has biased composition (polar residues); that stretch reads LSGSKRFSTQTVS. Residues 73-90 form a helical membrane-spanning segment; that stretch reads IILKCLLSACLVLVSAIA. At 91–264 the chain is on the forespore intermembrane space side; sequence YKTNIGPVSQ…IDPIQVISFE (174 aa).

Forms a complex with BofA and SpoIVFB localized in the mother-cell membrane surrounding the forespore. In terms of processing, may be degraded by FtsH. It is stabilized by an ftsH disruption mutant, and in a probably independent fashion, by overexpression of BofA.

Its subcellular location is the forespore outer membrane. Functionally, implicated in the coupling of mother cell to forespore gene expression. Required for spore formation at 37 degrees Celsius, but not at 30 degrees Celsius. SpoIVFA plays a central role in both maintaining the SpoIVFA/BofA/SpoIVFB complex and anchoring it to the outer forespore membrane. SpoIVFA brings BofA into close proximity to SpoIVFB, allowing BofA to inhibit SpoIVFB. Increased accumulation of SpoIVFA seems to inhibit the activity of SpoIVFB and thus regulates the activation of sigma-K. This Bacillus subtilis (strain 168) protein is Stage IV sporulation protein FA (spoIVFA).